The primary structure comprises 517 residues: Ascochitine biosynthesis cluster MFS transporter (517 aa).

Residues 1–12 (MSPDSRDPEAQR) are compositionally biased toward basic and acidic residues. Residues 1–45 (MSPDSRDPEAQRDVGLTKNTSSVNIPLESVKTDKTSNASPIMGPG) form a disordered region. N-linked (GlcNAc...) asparagine glycosylation is present at asparagine 19. The next 12 helical transmembrane spans lie at 75 to 95 (WVIT…STIF), 111 to 131 (VVMT…PLIW), 141 to 161 (LTPF…VGVA), 172 to 192 (FFIG…LADI), 204 to 224 (VYAA…GFVV), 232 to 252 (WTAW…LVFV), 308 to 328 (ILLL…LFFV), 347 to 367 (ALPL…ILFV), 390 to 410 (LMMV…WTSS), 421 to 441 (AGFP…SFLI), 457 to 475 (LIRS…PMYH), and 485 to 505 (LLGF…YYGP).

It belongs to the major facilitator superfamily. CAR1 family.

It is found in the membrane. MFS transporter; part of the gene cluster that mediates the biosynthesis the mycotoxin ascochitine, an o-quinone methide that plays a possible protective role against other microbial competitors in nature and is considered to be important for pathogenicity of legume-associated Didymella species. The polypeptide is Ascochitine biosynthesis cluster MFS transporter (Didymella fabae (Leaf and pod spot disease fungus)).